The sequence spans 231 residues: 5'-methylthioadenosine/S-adenosylhomocysteine nucleosidase (231 aa).

The active-site Proton acceptor is E12. Residues G78, V153, and M174–E175 contribute to the substrate site. D198 serves as the catalytic Proton donor.

The protein belongs to the PNP/UDP phosphorylase family. MtnN subfamily.

It catalyses the reaction S-adenosyl-L-homocysteine + H2O = S-(5-deoxy-D-ribos-5-yl)-L-homocysteine + adenine. The enzyme catalyses S-methyl-5'-thioadenosine + H2O = 5-(methylsulfanyl)-D-ribose + adenine. The catalysed reaction is 5'-deoxyadenosine + H2O = 5-deoxy-D-ribose + adenine. The protein operates within amino-acid biosynthesis; L-methionine biosynthesis via salvage pathway; S-methyl-5-thio-alpha-D-ribose 1-phosphate from S-methyl-5'-thioadenosine (hydrolase route): step 1/2. In terms of biological role, catalyzes the irreversible cleavage of the glycosidic bond in both 5'-methylthioadenosine (MTA) and S-adenosylhomocysteine (SAH/AdoHcy) to adenine and the corresponding thioribose, 5'-methylthioribose and S-ribosylhomocysteine, respectively. Also cleaves 5'-deoxyadenosine, a toxic by-product of radical S-adenosylmethionine (SAM) enzymes, into 5-deoxyribose and adenine. The chain is 5'-methylthioadenosine/S-adenosylhomocysteine nucleosidase from Vibrio cholerae serotype O1 (strain ATCC 39315 / El Tor Inaba N16961).